Consider the following 535-residue polypeptide: Proto-oncogene tyrosine-protein kinase Src (535 aa).

Residues 1-56 (MGSNKSKPKDASQRRRSLEPSENVHGAGGAFPASQTPSKPASADGHRGPSAAFVPP) form a disordered region. A lipid anchor (N-myristoyl glycine) is attached at G2. The span at 7–19 (KPKDASQRRRSLE) shows a compositional bias: basic and acidic residues. 3 positions are modified to phosphoserine: S17, S21, and S74. The 62-residue stretch at 83–144 (GGVTTFVALY…PSNYVAPSDS (62 aa)) folds into the SH3 domain. The SH2 domain occupies 150 to 247 (WYFGKITRRE…GLCHRLTTVC (98 aa)). At Y186 the chain carries Phosphotyrosine. Residues 269-522 (LRLEVKLGQG…YLQAFLEDYF (254 aa)) form the Protein kinase domain. ATP contacts are provided by residues 275 to 283 (LGQGCFGEV) and K297. The active-site Proton acceptor is D388. Y418 carries the post-translational modification Phosphotyrosine; by autocatalysis. Y418 is modified (phosphotyrosine; by FAK2). The residue at position 529 (Y529) is a Phosphotyrosine; by CSK.

Belongs to the protein kinase superfamily. Tyr protein kinase family. SRC subfamily. In terms of assembly, part of a complex comprised of PTPRA, BCAR1, BCAR3 (via SH2 domain) and SRC; the formation of the complex is dependent on integrin mediated-tyrosine phosphorylation of PTPRA. Interacts with CDCP1, TGFB1I1 and TOM1L2. Interacts with DDEF1/ASAP1 via its SH3 domain. Interacts with CCPG1. Interacts with the cytoplasmic domain of MUC1, phosphorylates it and increases binding of MUC1 with beta-catenin. Interacts with RALGPS1 via its SH3 domain. Interacts with CAV2 (tyrosine phosphorylated form). Interacts (via the SH3 domain and the protein kinase domain) with ARRB1; the interaction is independent of the phosphorylation state of SRC C-terminus. Interacts with FCAMR and PXN. Interacts with ARRB2. Interacts with ARRB1. Interacts with SRCIN1. Interacts with NDFIP2 and more weakly with NDFIP1. Interacts with PIK3CA and/or PIK3C2B, PTK2/FAK1, ESR1 (dimethylated on arginine) and FAK. Interacts (via SH2 and SH3 domain) with TNK2. Interacts (via protein kinase domain) with the tyrosine phosphorylated form of RUNX3 (via runt domain). Interacts with TRAF3 (via RING-type zinc finger domain). Interacts with RIGI, MAVS and TBK1. Interacts (via SH2 domain) with RACK1; the interaction is enhanced by tyrosine phosphorylation of RACK1 and inhibits SRC activity. Interacts (via SH2 domain) with the 'Tyr-402' phosphorylated form of PTK2B/PYK2. Interacts (via SH2 domain) with FLT3 (tyrosine phosphorylated). Identified in a complex containing FGFR4, NCAM1, CDH2, PLCG1, FRS2, SRC, SHC1, GAP43 and CTTN. Interacts with EPHB1; activates the MAPK/ERK cascade to regulate cell migration. Interacts with ERBB2 and STAT1. Interacts with PDGFRA (tyrosine phosphorylated). Interacts with CSF1R. Interacts (via SH2 domain) with the 'Tyr-9' phosphorylated form of PDPK1. Interacts with DDR2. Interacts with AMOTL2; this interaction regulates the translocation of phosphorylated SRC to peripheral cell-matrix adhesion sites. Interacts with DDR1 and DAB2. Interacts with TRAP1. Interacts with CBLC; the interaction is enhanced when SRC is phosphorylated at 'Tyr-424'. Interacts with ARHGEF5. Interacts (via cytoplasmic domain) with CEACAM1 (via SH2 domain); this interaction is regulated by trans-homophilic cell adhesion. Interacts with MPP2. Interacts with PRR7. Interacts (via kinase domain and to a lesser extent the SH2 domain) directly with PDLIM4; this interaction results in PTPN13-mediated dephosphorylation of this protein leading to its inactivation. Interacts with P85 (PIK3R1 or PIK3R2). Interacts with HNRNPA2B1. Interacts with IL6ST/gp130. Interacts (via SH3 domain) with PELP1 in the presence of 17-beta-estradiol. Interacts with AMBRA1. In terms of processing, myristoylated at Gly-2, and this is essential for targeting to membranes. Post-translationally, dephosphorylated at Tyr-529 by PTPRJ. Phosphorylated on Tyr-529 by c-Src kinase (CSK). The phosphorylated form is termed pp60c-src. Dephosphorylated by PTPRJ at Tyr-418. Normally maintained in an inactive conformation with the SH2 domain engaged with Tyr-529, the SH3 domain engaged with the SH2-kinase linker, and Tyr-418 dephosphorylated. Dephosphorylation of Tyr-529 as a result of protein tyrosine phosphatase (PTP) action disrupts the intramolecular interaction between the SH2 domain and Tyr-529, Tyr-418 can then become autophosphorylated, resulting in SRC activation. Phosphorylation of Tyr-529 by CSK allows this interaction to reform, resulting in SRC inactivation. CDK5-mediated phosphorylation at Ser-74 targets SRC to ubiquitin-dependent degradation and thus leads to cytoskeletal reorganization. Phosphorylated by PTK2/FAK1; this enhances kinase activity. Phosphorylated by PTK2B/PYK2; this enhances kinase activity. Upon activation of IL6ST by IL6, Tyr-418 is phosphorylated and Tyr-529 dephosphorylated. Displays reduced levels of autophosphorylation at Tyr-418 compared to isoform 2. In terms of processing, displays enhanced levels of autophosphorylation at Tyr-418 compared to isoform 1. Post-translationally, S-nitrosylation is important for activation of its kinase activity. Ubiquitinated in response to CDK5-mediated phosphorylation. Ubiquitination mediated by CBLC requires SRC autophosphorylation at Tyr-418 and may lead to lysosomal degradation.

It localises to the cell membrane. The protein resides in the mitochondrion inner membrane. The protein localises to the nucleus. Its subcellular location is the cytoplasm. It is found in the cytoskeleton. It localises to the perinuclear region. The protein resides in the cell junction. The protein localises to the focal adhesion. The enzyme catalyses L-tyrosyl-[protein] + ATP = O-phospho-L-tyrosyl-[protein] + ADP + H(+). Its activity is regulated as follows. Phosphorylation by CSK at Tyr-529 inhibits kinase activity. Inhibitory phosphorylation at Tyr-529 is enhanced by heme. Further phosphorylation by CDK1 partially reactivates CSK-inactivated SRC and facilitates complete reactivation by protein tyrosine phosphatase PTPRC. Integrin engagement stimulates kinase activity. Phosphorylation by PTK2/FAK1 enhances kinase activity. Butein and pseudosubstrate-based peptide inhibitors like CIYKYYF act as inhibitors. Phosphorylation at Tyr-418 increases kinase activity. In terms of biological role, non-receptor protein tyrosine kinase which is activated following engagement of many different classes of cellular receptors including immune response receptors, integrins and other adhesion receptors, receptor protein tyrosine kinases, G protein-coupled receptors as well as cytokine receptors. Participates in signaling pathways that control a diverse spectrum of biological activities including gene transcription, immune response, cell adhesion, cell cycle progression, apoptosis, migration, and transformation. Due to functional redundancy between members of the SRC kinase family, identification of the specific role of each SRC kinase is very difficult. SRC appears to be one of the primary kinases activated following engagement of receptors and plays a role in the activation of other protein tyrosine kinase (PTK) families. Receptor clustering or dimerization leads to recruitment of SRC to the receptor complexes where it phosphorylates the tyrosine residues within the receptor cytoplasmic domains. Plays an important role in the regulation of cytoskeletal organization through phosphorylation of specific substrates such as AFAP1. Phosphorylation of AFAP1 allows the SRC SH2 domain to bind AFAP1 and to localize to actin filaments. Cytoskeletal reorganization is also controlled through the phosphorylation of cortactin (CTTN). When cells adhere via focal adhesions to the extracellular matrix, signals are transmitted by integrins into the cell resulting in tyrosine phosphorylation of a number of focal adhesion proteins, including PTK2/FAK1 and paxillin (PXN). In addition to phosphorylating focal adhesion proteins, SRC is also active at the sites of cell-cell contact adherens junctions and phosphorylates substrates such as beta-catenin (CTNNB1), delta-catenin (CTNND1), and plakoglobin (JUP). Another type of cell-cell junction, the gap junction, is also a target for SRC, which phosphorylates connexin-43 (GJA1). SRC is implicated in regulation of pre-mRNA-processing and phosphorylates RNA-binding proteins such as KHDRBS1. Phosphorylates PKP3 at 'Tyr-195' in response to reactive oxygen species, which may cause the release of PKP3 from desmosome cell junctions into the cytoplasm. Also plays a role in PDGF-mediated tyrosine phosphorylation of both STAT1 and STAT3, leading to increased DNA binding activity of these transcription factors. Involved in the RAS pathway through phosphorylation of RASA1 and RASGRF1. Plays a role in EGF-mediated calcium-activated chloride channel activation. Required for epidermal growth factor receptor (EGFR) internalization through phosphorylation of clathrin heavy chain (CLTC and CLTCL1) at 'Tyr-1477'. Involved in beta-arrestin (ARRB1 and ARRB2) desensitization through phosphorylation and activation of GRK2, leading to beta-arrestin phosphorylation and internalization. Has a critical role in the stimulation of the CDK20/MAPK3 mitogen-activated protein kinase cascade by epidermal growth factor. Might be involved not only in mediating the transduction of mitogenic signals at the level of the plasma membrane but also in controlling progression through the cell cycle via interaction with regulatory proteins in the nucleus. Plays an important role in osteoclastic bone resorption in conjunction with PTK2B/PYK2. Both the formation of a SRC-PTK2B/PYK2 complex and SRC kinase activity are necessary for this function. Recruited to activated integrins by PTK2B/PYK2, thereby phosphorylating CBL, which in turn induces the activation and recruitment of phosphatidylinositol 3-kinase to the cell membrane in a signaling pathway that is critical for osteoclast function. Promotes energy production in osteoclasts by activating mitochondrial cytochrome C oxidase. Phosphorylates DDR2 on tyrosine residues, thereby promoting its subsequent autophosphorylation. Phosphorylates RUNX3 and COX2 on tyrosine residues, TNK2 on 'Tyr-284' and CBL on 'Tyr-738'. Enhances RIGI-elicited antiviral signaling. Phosphorylates PDPK1 at 'Tyr-9', 'Tyr-373' and 'Tyr-376'. Phosphorylates BCAR1 at 'Tyr-226'. Phosphorylates CBLC at multiple tyrosine residues, phosphorylation at 'Tyr-341' activates CBLC E3 activity. Phosphorylates synaptic vesicle protein synaptophysin (SYP). Involved in anchorage-independent cell growth. Required for podosome formation. Mediates IL6 signaling by activating YAP1-NOTCH pathway to induce inflammation-induced epithelial regeneration. Phosphorylates OTUB1, promoting deubiquitination of RPTOR. Non-receptor protein tyrosine kinase which phosphorylates synaptophysin with high affinity. Functionally, non-receptor protein tyrosine kinase which shows higher basal kinase activity than isoform 1, possibly due to weakened intramolecular interactions which enhance autophosphorylation of Tyr-418 and subsequent activation. The SH3 domain shows reduced affinity with the linker sequence between the SH2 and kinase domains which may account for the increased basal activity. Displays altered substrate specificity compared to isoform 1, showing weak affinity for synaptophysin and for peptide substrates containing class I or class II SH3 domain-binding motifs. Plays a role in L1CAM-mediated neurite elongation, possibly by acting downstream of L1CAM to drive cytoskeletal rearrangements involved in neurite outgrowth. In Mus musculus (Mouse), this protein is Proto-oncogene tyrosine-protein kinase Src.